The chain runs to 521 residues: Cytochrome P450 1A1 (521 aa).

Residue Phe229 participates in substrate binding. Heme is bound at residue Cys463.

This sequence belongs to the cytochrome P450 family. Heme serves as cofactor.

Its subcellular location is the endoplasmic reticulum membrane. The protein resides in the microsome membrane. It carries out the reaction an organic molecule + reduced [NADPH--hemoprotein reductase] + O2 = an alcohol + oxidized [NADPH--hemoprotein reductase] + H2O + H(+). In terms of biological role, cytochromes P450 are a group of heme-thiolate monooxygenases. They oxidize a variety of structurally unrelated compounds, including steroids, fatty acids, and xenobiotics. The protein is Cytochrome P450 1A1 (cyp1a1) of Limanda limanda (Common dab).